We begin with the raw amino-acid sequence, 881 residues long: Band 4.1-like protein 1 (881 aa).

The residue at position 1 (M1) is an N-acetylmethionine. The tract at residues 1 to 88 (MTTETGPDSE…TPSKAQKSPQ (88 aa)) is disordered. A compositionally biased stretch (low complexity) spans 17–35 (EAPQQPEAAAAVTTPVTPA). A Phosphothreonine modification is found at T30. Residues 38–50 (GHPEANSNEKHPS) are compositionally biased toward basic and acidic residues. Position 75 is a phosphoserine (S75). The span at 76 to 87 (ERTTPSKAQKSP) shows a compositional bias: polar residues. Phosphothreonine is present on T79. An FERM domain is found at 97–378 (AICRVTLLDA…EHHTFFRLVS (282 aa)). Residue Y343 is modified to Phosphotyrosine. 3 positions are modified to phosphoserine: S378, S430, and S437. The tract at residues 428–501 (SRSLDGAEFS…HKQEFLDKPE (74 aa)) is disordered. Residues 444 to 457 (ENHDAGPDGDKRDE) show a composition bias toward basic and acidic residues. Residues S461 and S466 each carry the phosphoserine modification. Positions 466-501 (SEAEEGEVRTPTKIKELKPEQETTPRHKQEFLDKPE) are enriched in basic and acidic residues. The residue at position 475 (T475) is a Phosphothreonine. Residues 483-541 (KPEQETTPRHKQEFLDKPEDVLLKHQASINELKRTLKEPNSKLIHRDRDWERERRLPSS) form a spectrin--actin-binding region. S510 is subject to Phosphoserine. Residues 514–538 (LKRTLKEPNSKLIHRDRDWERERRL) show a composition bias toward basic and acidic residues. The disordered stretch occupies residues 514–596 (LKRTLKEPNS…QERDTVFLKD (83 aa)). Phosphoserine is present on residues S540, S541, S544, and S546. A Phosphothreonine modification is found at T550. Over residues 550-577 (TPEKANERAGLREGSEEKVKPPRPRAPE) the composition is skewed to basic and acidic residues. Residues S564 and S578 each carry the phosphoserine modification. Position 580 is a phosphothreonine (T580). Phosphoserine is present on residues S639, S648, S650, S667, S672, S678, and S685. Positions 642–699 (ELDRDKSDSDTEGLLFSRDLNKGAPSQDDESGGIEDSPDRGACSTPDMPQFEPVKTET) are disordered. T686 bears the Phosphothreonine mark. S722, S784, and S870 each carry phosphoserine. Positions 746–881 (SITTETISTT…EERDKKPQES (136 aa)) are C-terminal (CTD).

As to quaternary structure, interacts with AGAP2. Highest expression in brain, lower in heart, kidney, pancreas, placenta, lung and skeletal muscle.

The protein localises to the cytoplasm. Its subcellular location is the cytoskeleton. May function to confer stability and plasticity to neuronal membrane via multiple interactions, including the spectrin-actin-based cytoskeleton, integral membrane channels and membrane-associated guanylate kinases. The polypeptide is Band 4.1-like protein 1 (Homo sapiens (Human)).